A 91-amino-acid polypeptide reads, in one-letter code: Elongation factor 1-beta (91 aa).

It belongs to the EF-1-beta/EF-1-delta family.

Functionally, promotes the exchange of GDP for GTP in EF-1-alpha/GDP, thus allowing the regeneration of EF-1-alpha/GTP that could then be used to form the ternary complex EF-1-alpha/GTP/AAtRNA. This chain is Elongation factor 1-beta, found in Sulfurisphaera tokodaii (strain DSM 16993 / JCM 10545 / NBRC 100140 / 7) (Sulfolobus tokodaii).